Consider the following 237-residue polypeptide: Probable transcriptional regulatory protein NIS_0560 (237 aa).

Belongs to the TACO1 family.

Its subcellular location is the cytoplasm. This chain is Probable transcriptional regulatory protein NIS_0560, found in Nitratiruptor sp. (strain SB155-2).